The sequence spans 394 residues: MRIFISTGEVSGDLQGSLLVGALRQQAEEQNLELELVGLGGEKMAAAGLTLLANTAAIGSVGLTESLRFIIPTWQIQQRVKRYLKTNPIDLLVLIDYMGPNLTIANYLRKTYPNLPILYYIAPQAWVWSPTKRETAQIMAVTDRLLAIFPGEAEFFQKQGLDVTWVGHPLLDRITKEAPSRGSAREKLGIDHNETVITLLPASRIQELRYLLPSICGAAQQLQSQLPNVKLLLPVSLKDYQPQIEQTLKEFNLTVQLLEGKETLTAIAAADLAITKSGTVNLEIALLNVPQVILYRVSPLTMAIARRIFKFNLPFVSPTNIVLNRGIMPELLQEQATASNIAQAGLELLLNGDRQAKIAQDYQELREALGEPGVCERAAQAVLEFANGQQKSRA.

This sequence belongs to the LpxB family.

The enzyme catalyses a lipid X + a UDP-2-N,3-O-bis[(3R)-3-hydroxyacyl]-alpha-D-glucosamine = a lipid A disaccharide + UDP + H(+). The protein operates within bacterial outer membrane biogenesis; LPS lipid A biosynthesis. Condensation of UDP-2,3-diacylglucosamine and 2,3-diacylglucosamine-1-phosphate to form lipid A disaccharide, a precursor of lipid A, a phosphorylated glycolipid that anchors the lipopolysaccharide to the outer membrane of the cell. This Synechocystis sp. (strain ATCC 27184 / PCC 6803 / Kazusa) protein is Lipid-A-disaccharide synthase (lpxB).